The following is a 921-amino-acid chain: Isoleucine--tRNA ligase (921 aa).

Positions 57–67 (PYANGDIHMGH) match the 'HIGH' region motif. Glutamate 552 lines the L-isoleucyl-5'-AMP pocket. The 'KMSKS' region motif lies at 593–597 (KMSKS). An ATP-binding site is contributed by lysine 596. Cysteine 888, cysteine 891, cysteine 908, and cysteine 911 together coordinate Zn(2+).

The protein belongs to the class-I aminoacyl-tRNA synthetase family. IleS type 1 subfamily. In terms of assembly, monomer. It depends on Zn(2+) as a cofactor.

Its subcellular location is the cytoplasm. It catalyses the reaction tRNA(Ile) + L-isoleucine + ATP = L-isoleucyl-tRNA(Ile) + AMP + diphosphate. Functionally, catalyzes the attachment of isoleucine to tRNA(Ile). As IleRS can inadvertently accommodate and process structurally similar amino acids such as valine, to avoid such errors it has two additional distinct tRNA(Ile)-dependent editing activities. One activity is designated as 'pretransfer' editing and involves the hydrolysis of activated Val-AMP. The other activity is designated 'posttransfer' editing and involves deacylation of mischarged Val-tRNA(Ile). This Bacillus cytotoxicus (strain DSM 22905 / CIP 110041 / 391-98 / NVH 391-98) protein is Isoleucine--tRNA ligase.